The following is a 485-amino-acid chain: 6-phosphogluconate dehydrogenase, decarboxylating (485 aa).

NADP(+)-binding positions include 12-17 (GLAVMG), 35-37 (NRT), 77-79 (VKA), and asparagine 105. Substrate-binding positions include asparagine 105 and 131–133 (SGG). Lysine 186 functions as the Proton acceptor in the catalytic mechanism. Position 189–190 (189–190 (HN)) interacts with substrate. The Proton donor role is filled by glutamate 193. Tyrosine 194, lysine 263, arginine 290, arginine 449, and histidine 455 together coordinate substrate.

Belongs to the 6-phosphogluconate dehydrogenase family. As to quaternary structure, homodimer.

It carries out the reaction 6-phospho-D-gluconate + NADP(+) = D-ribulose 5-phosphate + CO2 + NADPH. The protein operates within carbohydrate degradation; pentose phosphate pathway; D-ribulose 5-phosphate from D-glucose 6-phosphate (oxidative stage): step 3/3. Its function is as follows. Catalyzes the oxidative decarboxylation of 6-phosphogluconate to ribulose 5-phosphate and CO(2), with concomitant reduction of NADP to NADPH. This Cunninghamella elegans protein is 6-phosphogluconate dehydrogenase, decarboxylating (6-PGD).